A 144-amino-acid polypeptide reads, in one-letter code: MELNNIKPADGAKKDKRRVGRGIGSGLGKTAGRGHKGQKSRAGGFHKVGFEGGQMPMHRRLPKRGFVSLTKGDTARVRLSDLAGVGVAEIDLLVLKQAGVVSGAAKAAKVYLAGELGKAIKLSGVAVTKGARAAIEAAGGSVAE.

The interval 1–57 is disordered; it reads MELNNIKPADGAKKDKRRVGRGIGSGLGKTAGRGHKGQKSRAGGFHKVGFEGGQMPM. Positions 21 to 31 are enriched in gly residues; it reads RGIGSGLGKTA.

Belongs to the universal ribosomal protein uL15 family. Part of the 50S ribosomal subunit.

In terms of biological role, binds to the 23S rRNA. The sequence is that of Large ribosomal subunit protein uL15 from Thiobacillus denitrificans (strain ATCC 25259 / T1).